Consider the following 389-residue polypeptide: G2/M cell-cycle inhibitor DR6 (389 aa).

Belongs to the Roseolovirus DR6 family.

Its subcellular location is the host nucleus. Inhibits the host G2/M cell-cycle progression in a p53-independent manner. The protein is G2/M cell-cycle inhibitor DR6 (DR6L) of Homo sapiens (Human).